The primary structure comprises 207 residues: Glycerol-3-phosphate acyltransferase (207 aa).

5 helical membrane passes run 3-23 (LIGL…VWVG), 54-74 (TIVM…PIVF), 81-101 (GTAT…VSIF), 122-142 (PIMF…TSIV), and 158-178 (LVFQ…FVFY).

Belongs to the PlsY family. In terms of assembly, probably interacts with PlsX.

The protein resides in the cell membrane. It catalyses the reaction an acyl phosphate + sn-glycerol 3-phosphate = a 1-acyl-sn-glycero-3-phosphate + phosphate. Its pathway is lipid metabolism; phospholipid metabolism. Its function is as follows. Catalyzes the transfer of an acyl group from acyl-phosphate (acyl-PO(4)) to glycerol-3-phosphate (G3P) to form lysophosphatidic acid (LPA). This enzyme utilizes acyl-phosphate as fatty acyl donor, but not acyl-CoA or acyl-ACP. The polypeptide is Glycerol-3-phosphate acyltransferase (Levilactobacillus brevis (strain ATCC 367 / BCRC 12310 / CIP 105137 / JCM 1170 / LMG 11437 / NCIMB 947 / NCTC 947) (Lactobacillus brevis)).